Reading from the N-terminus, the 141-residue chain is Hemoglobin subunit alpha-A (141 aa).

The region spanning 1-141 (VLSGPDKTNV…VGAVLTAKYR (141 aa)) is the Globin domain. Residue His-58 participates in O2 binding. A heme b-binding site is contributed by His-87.

It belongs to the globin family. Heterotetramer of two alpha chains and two beta chains. As to expression, red blood cells.

Its function is as follows. Involved in oxygen transport from the lung to the various peripheral tissues. This is Hemoglobin subunit alpha-A (HBAA) from Rhea americana (Greater rhea).